The chain runs to 745 residues: MAPSKVVIYAMRRELRLSDNPIFHHLSNPESKHGFSHLLPVYVFPAQQIDLSGFVPKGSENPHPAPKSAVGGYARCGPYRAKFLAESVWDLKTSLQSIGSDLLVRAGPYKDVIQSLVEGLKAKECQVGAVWMTSHEGSEEKSEEKTVASFCAKSGIDFKLWDDEKYLIHDRDTGITHLNDLPDVFTTYRKQIEPLREKARKTLPVPEKGALPAYPDIDMIPSQQPPFNIPGTCEELVDAVVRPVKNFLKDLPDFPEKAESSHPFRGGETSAHKRIDHLVLSGGMKSYKDSRNGLLGPDFSTKLSAYLAQGCVTARQIHHALVAYEDGTGTKYKGADGFGEGDNQGTETVRMELLWRDYMRLCHQKYGDKLFRVEGFNGKHTDYEGEDKKYGWRTANTSIALPGQEPTPEKVSEILARFNAGTTGMGLIDASQRELIHTGYTSNRTRQNVASFLAKHLEIDWRYGAEWYEMLLVDYDVSSNWANWQYVAGVGNDPRGAARIFNPVKQAFDYDKDGTYVRTWVPEVAKFENLENVFQAWTASKEDLKTAGLEGNIMVTDPVKPIKFNLDHKPSKVKKRPFFRKRGTKTRDAQGSAESPGSSDSHSGSGGSPDGSGGGNIPSESNCAAAGSGQAQQTHQGSGRSQSSSNHGGRSHSHQHNQQNYHHSHRGNDYTRGGGGGRGGRGGRGGGGGGYSASQGYYGIGGGYRGGGRGRGGGGGFRGRYAPTGGLGGHHHSEQQVASQFQTDA.

Residues 1-22 (MAPSKVVIYAMRRELRLSDNPI) constitute a mitochondrion transit peptide. Residues 23 to 166 (FHHLSNPESK…DFKLWDDEKY (144 aa)) enclose the Photolyase/cryptochrome alpha/beta domain. Disordered regions lie at residues 563–688 (KFNL…GGGG) and 702–745 (GGYR…QTDA). The span at 571 to 584 (SKVKKRPFFRKRGT) shows a compositional bias: basic residues. Low complexity predominate over residues 591 to 603 (GSAESPGSSDSHS). Over residues 604 to 616 (GSGGSPDGSGGGN) the composition is skewed to gly residues. Low complexity predominate over residues 632–648 (QQTHQGSGRSQSSSNHG). 2 stretches are compositionally biased toward gly residues: residues 672–688 (RGGG…GGGG) and 702–718 (GGYR…GGFR). Polar residues predominate over residues 735–745 (QQVASQFQTDA).

The protein belongs to the DNA photolyase class-1 family. FAD serves as cofactor. (6R)-5,10-methylene-5,6,7,8-tetrahydrofolate is required as a cofactor.

Its subcellular location is the mitochondrion. May have a photoreceptor function. The chain is Putative cryptochrome DASH, mitochondrial (cry) from Neurospora crassa (strain ATCC 24698 / 74-OR23-1A / CBS 708.71 / DSM 1257 / FGSC 987).